Reading from the N-terminus, the 1283-residue chain is Peroxisomal ATPase PEX1 (1283 aa).

Residues 346–367 (SKTKQNVLSPEKEKQMSEPLDQ) are disordered. At Ser354 the chain carries Phosphoserine. A compositionally biased stretch (basic and acidic residues) spans 355–367 (PEKEKQMSEPLDQ). ATP-binding positions include 599 to 606 (GGKGSGKS) and 881 to 888 (GPPGTGKT). Ser1181, Ser1209, and Ser1211 each carry phosphoserine. The segment at 1260-1283 (FQNPKRRKNQSGTMFRPGQKVTLA) is disordered.

The protein belongs to the AAA ATPase family. Homooligomer; homooligomerizes in the cytosol, interaction with PEX6 promotes dissociation of the homooligomer. Interacts with PEX6; forming the PEX1-PEX6 AAA ATPase complex, which is composed of a heterohexamer formed by a trimer of PEX1-PEX6 dimers. Interacts indirectly with PEX26, via its interaction with PEX6.

The protein localises to the cytoplasm. Its subcellular location is the cytosol. It is found in the peroxisome membrane. The enzyme catalyses ATP + H2O = ADP + phosphate + H(+). Functionally, component of the PEX1-PEX6 AAA ATPase complex, a protein dislocase complex that mediates the ATP-dependent extraction of the PEX5 receptor from peroxisomal membranes, an essential step for PEX5 recycling. Specifically recognizes PEX5 monoubiquitinated at 'Cys-11', and pulls it out of the peroxisome lumen through the PEX2-PEX10-PEX12 retrotranslocation channel. Extraction by the PEX1-PEX6 AAA ATPase complex is accompanied by unfolding of the TPR repeats and release of bound cargo from PEX5. The polypeptide is Peroxisomal ATPase PEX1 (Homo sapiens (Human)).